A 151-amino-acid polypeptide reads, in one-letter code: Regulatory protein RecX (151 aa).

The protein belongs to the RecX family.

It is found in the cytoplasm. In terms of biological role, modulates RecA activity. This is Regulatory protein RecX from Herminiimonas arsenicoxydans.